The primary structure comprises 160 residues: Nucleotide-binding protein Tola_0795 (160 aa).

Belongs to the YajQ family.

In terms of biological role, nucleotide-binding protein. This chain is Nucleotide-binding protein Tola_0795, found in Tolumonas auensis (strain DSM 9187 / NBRC 110442 / TA 4).